The sequence spans 67 residues: Conotoxin AbVIM (67 aa).

The signal sequence occupies residues 1-17; the sequence is VLIIAVLFLTACQLIAT. The propeptide occupies 18-40; it reads ASYARSERKHPDLRLSSRNSKLS. 3 disulfides stabilise this stretch: Cys43/Cys57, Cys50/Cys61, and Cys56/Cys66.

The protein belongs to the conotoxin O1 superfamily. In terms of tissue distribution, expressed by the venom duct.

The protein resides in the secreted. The protein is Conotoxin AbVIM of Conus abbreviatus (Abbreviated cone).